The chain runs to 535 residues: T-box transcription factor TBX21 (535 aa).

The interval 1–62 (MGIVEPGCGD…SLGSPYPGGA (62 aa)) is disordered. At S53 the chain carries Phosphoserine. Y77 is subject to Phosphotyrosine. The disordered stretch occupies residues 83–109 (AAGFPGAGESFPPPADAEGYQPGEGYA). Y118 is subject to Phosphotyrosine. The segment at residues 141-326 (LNNHLLWSKF…NNPFAKGFRE (186 aa)) is a DNA-binding region (T-box). Y220 is modified (phosphotyrosine; by ABL1). Position 225 is a phosphoserine (S225). The residue at position 266 (Y266) is a Phosphotyrosine; by ABL1. The residue at position 303 (T303) is a Phosphothreonine. The residue at position 305 (Y305) is a Phosphotyrosine; by ABL1. A Glycyl lysine isopeptide (Lys-Gly) (interchain with G-Cter in ubiquitin) cross-link involves residue K314. The tract at residues 449 to 535 (RPMRTLPMEP…EGQFYNYFPN (87 aa)) is disordered. Residues 503–520 (SPYPSSGDSSSPAGAPSP) are compositionally biased toward low complexity. The residue at position 513 (S513) is a Phosphoserine. Y530 is modified (phosphotyrosine; by ITK).

Interacts with RUNX1, RUNX3, ITK, ABL1, RELA, CDK9 and KDM6B. The phosphorylated form (at Thr-303) interacts with NFATC2. Interacts with SMARCA4 in a KDM6B-dependent manner. Interacts with CCTN1. Interacts with USP10. The phosphorylated form (at Tyr-530) interacts with GATA3. In terms of processing, phosphorylations at Ser-53, Tyr-77, Ser-225 and Ser-513 are regulated by mTORC1. Phosphorylation at Tyr-530 is essential for its interaction GATA3. Phosphorylation at Tyr-220, Tyr-266 and Tyr-305 enhances its transcriptional activator activity. Phosphorylation at Thr-303 is required for its interaction with NFATC2. Post-translationally, ubiquitinated at Lys-314, leading to its degradation by the proteasome. Ubiquitination is essential for controlling protein stability, binding to the T-box-binding element of the IFN-gamma promoter, and for interaction with NFATC2 through induction of phosphorylation at Thr-303. Deubiquitinated by USP10 leading to its stabilization. As to expression, T-cell specific.

The protein localises to the nucleus. Its function is as follows. Lineage-defining transcription factor which initiates Th1 lineage development from naive Th precursor cells both by activating Th1 genetic programs and by repressing the opposing Th2 and Th17 genetic programs. Activates transcription of a set of genes important for Th1 cell function, including those encoding IFN-gamma and the chemokine receptor CXCR3. Induces permissive chromatin accessibilty and CpG methylation in IFNG. Activates IFNG and CXCR3 genes in part by recruiting chromatin remodeling complexes including KDM6B, a SMARCA4-containing SWI/SNF-complex, and an H3K4me2-methyltransferase complex to their promoters and all of these complexes serve to establish a more permissive chromatin state conducive with transcriptional activation. Can activate Th1 genes also via recruitment of Mediator complex and P-TEFb (composed of CDK9 and CCNT1/cyclin-T1) in the form of the super elongation complex (SEC) to super-enhancers and associated genes in activated Th1 cells. Inhibits the Th17 cell lineage commitment by blocking RUNX1-mediated transactivation of Th17 cell-specific transcriptinal regulator RORC. Inhibits the Th2 cell lineage commitment by suppressing the production of Th2 cytokines, such as IL-4, IL-5, and IL- 13, via repression of transcriptional regulators GATA3 and NFATC2. Protects Th1 cells from amplifying aberrant type-I IFN response in an IFN-gamma abundant microenvironment by acting as a repressor of type-I IFN transcription factors and type-I IFN-stimulated genes. Acts as a regulator of antiviral B-cell responses; controls chronic viral infection by promoting the antiviral antibody IgG2a isotype switching and via regulation of a broad antiviral gene expression program. Required for the correct development of natural killer (NK) and mucosal-associated invariant T (MAIT) cells. The protein is T-box transcription factor TBX21 (TBX21) of Homo sapiens (Human).